The following is a 206-amino-acid chain: Orotate phosphoribosyltransferase (206 aa).

Residues Arg97, Lys98, Lys101, and 125–133 (NDVIASGRS) contribute to the 5-phospho-alpha-D-ribose 1-diphosphate site. Arg157 lines the orotate pocket.

Belongs to the purine/pyrimidine phosphoribosyltransferase family. PyrE subfamily. Homodimer. It depends on Mg(2+) as a cofactor.

The catalysed reaction is orotidine 5'-phosphate + diphosphate = orotate + 5-phospho-alpha-D-ribose 1-diphosphate. It functions in the pathway pyrimidine metabolism; UMP biosynthesis via de novo pathway; UMP from orotate: step 1/2. Its function is as follows. Catalyzes the transfer of a ribosyl phosphate group from 5-phosphoribose 1-diphosphate to orotate, leading to the formation of orotidine monophosphate (OMP). This is Orotate phosphoribosyltransferase from Chlamydia felis (strain Fe/C-56) (Chlamydophila felis).